A 253-amino-acid chain; its full sequence is Small ribosomal subunit protein eS6 (253 aa).

Residues 200-253 form a disordered region; it reads KKRLAKRKQSENDYAKLLAQRKKESKVRRQEELKRRRSASMRDSKSSDKSAPQK. Residues 226-247 are compositionally biased toward basic and acidic residues; that stretch reads VRRQEELKRRRSASMRDSKSSD.

This sequence belongs to the eukaryotic ribosomal protein eS6 family. As to quaternary structure, component of the small ribosomal subunit. Part of the small subunit (SSU) processome, composed of more than 70 proteins and the RNA chaperone small nucleolar RNA (snoRNA) U3. Post-translationally, ribosomal protein S6 is the major substrate of protein kinases in eukaryote ribosomes.

It localises to the cytoplasm. Its subcellular location is the nucleus. The protein localises to the nucleolus. Functionally, component of the 40S small ribosomal subunit. Plays an important role in controlling cell growth and proliferation through the selective translation of particular classes of mRNA. Part of the small subunit (SSU) processome, first precursor of the small eukaryotic ribosomal subunit. During the assembly of the SSU processome in the nucleolus, many ribosome biogenesis factors, an RNA chaperone and ribosomal proteins associate with the nascent pre-rRNA and work in concert to generate RNA folding, modifications, rearrangements and cleavage as well as targeted degradation of pre-ribosomal RNA by the RNA exosome. The sequence is that of Small ribosomal subunit protein eS6 (RpS6) from Spodoptera frugiperda (Fall armyworm).